A 31-amino-acid chain; its full sequence is Photosystem II reaction center protein M (31 aa).

The chain crosses the membrane as a helical span at residues 5 to 25 (ILALMATALFIIIPTAFLIIL).

It belongs to the PsbM family. As to quaternary structure, PSII is composed of 1 copy each of membrane proteins PsbA, PsbB, PsbC, PsbD, PsbE, PsbF, PsbH, PsbI, PsbJ, PsbK, PsbL, PsbM, PsbT, PsbX, PsbY, PsbZ, Psb30/Ycf12, at least 3 peripheral proteins of the oxygen-evolving complex and a large number of cofactors. It forms dimeric complexes.

The protein resides in the plastid. The protein localises to the chloroplast thylakoid membrane. Its function is as follows. One of the components of the core complex of photosystem II (PSII). PSII is a light-driven water:plastoquinone oxidoreductase that uses light energy to abstract electrons from H(2)O, generating O(2) and a proton gradient subsequently used for ATP formation. It consists of a core antenna complex that captures photons, and an electron transfer chain that converts photonic excitation into a charge separation. This subunit is found at the monomer-monomer interface. The chain is Photosystem II reaction center protein M from Mesostigma viride (Green alga).